Reading from the N-terminus, the 291-residue chain is Beta-lactamase CTX-M-1 (291 aa).

The N-terminal stretch at 1–28 is a signal peptide; sequence MVKKSLRQFTLMATATVTLLLGSVPLYA. The Nucleophile; acyl-ester intermediate role is filled by S73. K76, S133, E169, and S240 together coordinate a beta-lactam. Catalysis depends on E169, which acts as the Proton acceptor.

Belongs to the class-A beta-lactamase family. As to quaternary structure, monomer.

It is found in the secreted. The catalysed reaction is a beta-lactam + H2O = a substituted beta-amino acid. With respect to regulation, inhibited by the beta-lactamase-blocking agent clavulanic acid; in the TG1 strain. Its function is as follows. Extended-spectrum beta-lactamase (ESBL) which confers resistance to penicillins, as well as first, second and third-generation cephalosporins. Has cefotaxime-hydrolyzing activity. Inactive against the cephamycin antibiotic, cefoxitin, or against the carbapenem, imipenem. The chain is Beta-lactamase CTX-M-1 from Escherichia coli.